An 837-amino-acid polypeptide reads, in one-letter code: Translation initiation factor IF-2 (837 aa).

Disordered regions lie at residues 1 to 44 and 62 to 251; these read MTEK…VRKS and KAQE…TKPA. Basic and acidic residues-rich tracts occupy residues 62-102 and 111-165; these read KAQE…EAKP and ADPE…HNDS. A compositionally biased stretch (basic residues) spans 189-205; sequence RENHIRTGKNKVTKAKK. Basic and acidic residues predominate over residues 206–229; sequence GGRDDNGSKDERSADRRNQKDMRG. Residues 242 to 251 are compositionally biased toward polar residues; sequence TLQQAFTKPA. The tr-type G domain occupies 337 to 506; sequence QRAPVVTIMG…LLQSEVLELT (170 aa). The G1 stretch occupies residues 346-353; sequence GHVDHGKT. Position 346–353 (346–353) interacts with GTP; that stretch reads GHVDHGKT. Residues 371–375 form a G2 region; it reads GITQH. Positions 392–395 are G3; sequence DTPG. Residues 392 to 396 and 446 to 449 each bind GTP; these read DTPGH and NKID. The segment at 446–449 is G4; the sequence is NKID. The tract at residues 482-484 is G5; the sequence is SAK.

The protein belongs to the TRAFAC class translation factor GTPase superfamily. Classic translation factor GTPase family. IF-2 subfamily.

The protein localises to the cytoplasm. In terms of biological role, one of the essential components for the initiation of protein synthesis. Protects formylmethionyl-tRNA from spontaneous hydrolysis and promotes its binding to the 30S ribosomal subunits. Also involved in the hydrolysis of GTP during the formation of the 70S ribosomal complex. This Actinobacillus succinogenes (strain ATCC 55618 / DSM 22257 / CCUG 43843 / 130Z) protein is Translation initiation factor IF-2.